Here is a 147-residue protein sequence, read N- to C-terminus: Large ribosomal subunit protein uL15 (147 aa).

Residues Met-1–Leu-57 form a disordered region. A compositionally biased stretch (basic residues) spans Thr-30–Gly-44.

This sequence belongs to the universal ribosomal protein uL15 family. As to quaternary structure, part of the 50S ribosomal subunit.

In terms of biological role, binds to the 23S rRNA. This Thermotoga neapolitana (strain ATCC 49049 / DSM 4359 / NBRC 107923 / NS-E) protein is Large ribosomal subunit protein uL15.